A 1174-amino-acid chain; its full sequence is K(+) efflux antiporter 2, chloroplastic (1174 aa).

Residues 1–57 (MDFASSVQRQSMFHGGADFASYCLPNRMISAKLCPKGLGGTRFWDPMIDSKVRSAIR) constitute a chloroplast transit peptide. Over 58-565 (SKRNVSYRSS…MFPQQEVNEE (508 aa)) the chain is Stromal. The tract at residues 119–141 (GSDDREVTFSKEEKDTREQDSAP) is disordered. Positions 142–350 (SLEELRDLLN…ALQRAEKTLF (209 aa)) form a coiled coil. N6-acetyllysine; by NSI is present on lysine 170. Positions 420–448 (EAEGEAEKSKNVVLTKKQEVQKDLPRESS) are enriched in basic and acidic residues. Positions 420–457 (EAEGEAEKSKNVVLTKKQEVQKDLPRESSSHNGTKTSL) are disordered. The chain crosses the membrane as a helical span at residues 566–586 (EASLLDVLWLLLASVIFVPLF). The Chloroplast intermembrane segment spans residues 587 to 592 (QKIPGG). Residues 593–613 (SPVLGYLAAGILIGPYGLSII) form a helical membrane-spanning segment. Over 614-620 (RNVHGTK) the chain is Stromal. Residues 621–641 (AIAEFGVVFLLFNIGLELSVE) traverse the membrane as a helical segment. Residues 642 to 648 (RLSSMKK) lie on the Chloroplast intermembrane side of the membrane. A helical transmembrane segment spans residues 649–669 (YVFGLGSAQVLVTAAVIGLIT). Over 670–678 (HYVAGQAGP) the chain is Stromal. Residues 679-699 (AAIVIGNGLALSSTAVVLQVL) form a helical membrane-spanning segment. At 700–713 (QERGESTSRHGRAT) the chain is on the chloroplast intermembrane side. Residues 714–734 (FSVLLFQDLAVVVLLILIPLI) traverse the membrane as a helical segment. Residues 735 to 746 (SPNSSKGGIGFQ) lie on the Stromal side of the membrane. The chain crosses the membrane as a helical span at residues 747 to 767 (AIAEALGLAAIKAAVAITGII). Over 768-807 (AGGRLLLRPIYKQIAENRNAEIFSANTLLVILGTSLLTAR) the chain is Chloroplast intermembrane. The helical transmembrane segment at 808–828 (AGLSMALGAFLAGLLLAETEF) threads the bilayer. Over 829–841 (SLQVESDIAPYRG) the chain is Stromal. Residues 842-862 (LLLGLFFMTVGMSIDPKLLLA) form a helical membrane-spanning segment. Residues 863–865 (NFP) are Chloroplast intermembrane-facing. The chain crosses the membrane as a helical span at residues 866–886 (LIMGTLGLLLVGKTILVVIIG). Residues 887 to 898 (KLFGISIISAVR) lie on the Stromal side of the membrane. The helical transmembrane segment at 899-919 (VGLLLAPGGEFAFVAFGEAVN) threads the bilayer. The Chloroplast intermembrane portion of the chain corresponds to 920–928 (QGIMTPQLS). A helical transmembrane segment spans residues 929 to 949 (SLLFLVVGISMALTPWLAAGG). The Stromal portion of the chain corresponds to 950–1174 (QLIASRFELQ…NQIIEGTLAI (225 aa)). The RCK N-terminal domain occupies 975–1092 (QGHIIICGFG…EKAGATAVVP (118 aa)). Residues 1141 to 1174 (SLGYGFSRSTSKPKPPSPSETSDDNQIIEGTLAI) form a disordered region.

The protein belongs to the monovalent cation:proton antiporter 2 (CPA2) transporter (TC 2.A.37) family. KEA (TC 2.A.37.1) subfamily. In terms of processing, acetylated at Lys-170 by the stromal acetyltransferase enzyme NSI. In terms of tissue distribution, detected in leaves, stems and flowers. Expressed in shoots and roots. Mainly localized to leaf veins, hypocotyls, mesophylls and guard cells. Accumulates at high levels in small and dividing plastids (at protein level).

The protein localises to the plastid. It is found in the chloroplast inner membrane. It localises to the plastid inner membrane. The catalysed reaction is K(+)(in) + H(+)(out) = K(+)(out) + H(+)(in). With respect to regulation, repressed by sodium ions Na(+). Functionally, electroneutral K(+)/H(+) efflux antiporter modulating monovalent cation and pH homeostasis in plastids, especially during plastid division and thylakoid membrane formation. Transports K(+) and Cs(+) preferentially relative to Na(+) or Li(+). May function in osmotic adjustment. Collaboratively with KEA1, adjusts alkaline stromal pH upon light to dark transitions in plastids. Together with KEA1, critical for chloroplast development, including chloroplast RNA-metabolism (e.g. rRNA maturation, polysome loading and RNA-protein interactions) and plastid gene expression (PGE), ion homeostasis, and photosynthesis. Contributes, during early seedling development, to the regulation of photosynthesis and abscisic acid- (ABA-) mediated primary root growth in a sucrose-dependent manner. Involved in the regulation of reactive oxygen and nitrogen species (ROS and RNS) metabolism. Required in roots for rapid hyperosmotic-induced Ca(2+) responses and for osmo-sensory potentiation in hyperosmotic conditions. May counteract resilience to drought and salt stress, involving photorespiratory pathway and stomata closure. In Arabidopsis thaliana (Mouse-ear cress), this protein is K(+) efflux antiporter 2, chloroplastic.